A 287-amino-acid chain; its full sequence is Phosphatidylserine decarboxylase proenzyme (287 aa).

Residues Asp90, His147, and Ser253 each act as charge relay system; for autoendoproteolytic cleavage activity in the active site. The active-site Schiff-base intermediate with substrate; via pyruvic acid; for decarboxylase activity is Ser253. Position 253 is a pyruvic acid (Ser); by autocatalysis (Ser253).

Belongs to the phosphatidylserine decarboxylase family. PSD-B subfamily. Prokaryotic type I sub-subfamily. In terms of assembly, heterodimer of a large membrane-associated beta subunit and a small pyruvoyl-containing alpha subunit. Requires pyruvate as cofactor. Post-translationally, is synthesized initially as an inactive proenzyme. Formation of the active enzyme involves a self-maturation process in which the active site pyruvoyl group is generated from an internal serine residue via an autocatalytic post-translational modification. Two non-identical subunits are generated from the proenzyme in this reaction, and the pyruvate is formed at the N-terminus of the alpha chain, which is derived from the carboxyl end of the proenzyme. The autoendoproteolytic cleavage occurs by a canonical serine protease mechanism, in which the side chain hydroxyl group of the serine supplies its oxygen atom to form the C-terminus of the beta chain, while the remainder of the serine residue undergoes an oxidative deamination to produce ammonia and the pyruvoyl prosthetic group on the alpha chain. During this reaction, the Ser that is part of the protease active site of the proenzyme becomes the pyruvoyl prosthetic group, which constitutes an essential element of the active site of the mature decarboxylase.

It localises to the cell membrane. It carries out the reaction a 1,2-diacyl-sn-glycero-3-phospho-L-serine + H(+) = a 1,2-diacyl-sn-glycero-3-phosphoethanolamine + CO2. The protein operates within phospholipid metabolism; phosphatidylethanolamine biosynthesis; phosphatidylethanolamine from CDP-diacylglycerol: step 2/2. Its function is as follows. Catalyzes the formation of phosphatidylethanolamine (PtdEtn) from phosphatidylserine (PtdSer). This Aliivibrio fischeri (strain MJ11) (Vibrio fischeri) protein is Phosphatidylserine decarboxylase proenzyme.